A 354-amino-acid polypeptide reads, in one-letter code: Kelch domain-containing protein 8B (354 aa).

8 Kelch repeats span residues 1-31 (MSAG…HQDE), 32-79 (HLLV…VLGK), 81-127 (VLVV…ERDG), 128-175 (MVYA…LHGN), 176-222 (KIYV…MAEG), 224-281 (VFSL…SLGG), 282-329 (HIVA…QAGP), and 331-354 (LFVI…RDGV).

It is found in the cytoplasm. The protein resides in the midbody. In terms of biological role, involved in pinching off the separated nuclei at the cleavage furrow and in cytokinesis. Required for mitotic integrity and maintenance of chromosomal stability. Protects cells against mitotic errors, centrosomal amplification, micronucleus formation and aneuploidy. Plays a key role of midbody function involving abscission of the daughter cells during cytokinesis and appropriate chromosomal and nuclear segregation into the daughter cells. This is Kelch domain-containing protein 8B (KLHDC8B) from Pongo abelii (Sumatran orangutan).